The chain runs to 195 residues: Glutamyl-tRNA(Gln) amidotransferase subunit C, mitochondrial (195 aa).

A mitochondrion-targeting transit peptide spans 1–18 (MNLSTIGFQVIFKQRLRC).

The protein belongs to the GatC family. In terms of assembly, subunit of the heterotrimeric GatCAB amidotransferase (AdT) complex, composed of A, B and C subunits.

It localises to the mitochondrion. The catalysed reaction is L-glutamyl-tRNA(Gln) + L-glutamine + ATP + H2O = L-glutaminyl-tRNA(Gln) + L-glutamate + ADP + phosphate + H(+). Its function is as follows. Allows the formation of correctly charged Gln-tRNA(Gln) through the transamidation of misacylated Glu-tRNA(Gln) in the mitochondria. The reaction takes place in the presence of glutamine and ATP through an activated gamma-phospho-Glu-tRNA(Gln). The polypeptide is Glutamyl-tRNA(Gln) amidotransferase subunit C, mitochondrial (Brugia malayi (Filarial nematode worm)).